A 507-amino-acid polypeptide reads, in one-letter code: ATP synthase subunit alpha, chloroplastic (507 aa).

170–177 (GDRQTGKT) contacts ATP.

It belongs to the ATPase alpha/beta chains family. As to quaternary structure, F-type ATPases have 2 components, CF(1) - the catalytic core - and CF(0) - the membrane proton channel. CF(1) has five subunits: alpha(3), beta(3), gamma(1), delta(1), epsilon(1). CF(0) has four main subunits: a, b, b' and c.

The protein resides in the plastid. The protein localises to the chloroplast thylakoid membrane. The catalysed reaction is ATP + H2O + 4 H(+)(in) = ADP + phosphate + 5 H(+)(out). In terms of biological role, produces ATP from ADP in the presence of a proton gradient across the membrane. The alpha chain is a regulatory subunit. The sequence is that of ATP synthase subunit alpha, chloroplastic from Ipomoea purpurea (Common morning glory).